A 75-amino-acid chain; its full sequence is Large ribosomal subunit protein bL31 (75 aa).

It belongs to the bacterial ribosomal protein bL31 family. Type A subfamily. As to quaternary structure, part of the 50S ribosomal subunit.

In terms of biological role, binds the 23S rRNA. The polypeptide is Large ribosomal subunit protein bL31 (Chlorobium luteolum (strain DSM 273 / BCRC 81028 / 2530) (Pelodictyon luteolum)).